A 173-amino-acid polypeptide reads, in one-letter code: Cytochrome b6-f complex subunit 4, chloroplastic (173 aa).

The transit peptide at 1 to 14 (ESALERRSSSVVMN) directs the protein to the chloroplast. 3 consecutive transmembrane segments (helical) span residues 49-69 (LLYMFPVCILGTFAAIVGLAV), 108-128 (LLGVLSMAAVPAGLITVPFIE), and 144-164 (SVFLLGTVVAIWLGIGATLPI).

This sequence belongs to the cytochrome b family. PetD subfamily. As to quaternary structure, the 4 large subunits of the cytochrome b6-f complex are cytochrome b6, subunit IV (17 kDa polypeptide, petD), cytochrome f and the Rieske protein, while the 4 small subunits are petG, petL, petM and petN. The complex functions as a dimer.

The protein localises to the plastid. The protein resides in the chloroplast thylakoid membrane. In terms of biological role, component of the cytochrome b6-f complex, which mediates electron transfer between photosystem II (PSII) and photosystem I (PSI), cyclic electron flow around PSI, and state transitions. The protein is Cytochrome b6-f complex subunit 4, chloroplastic of Euglena gracilis.